The sequence spans 125 residues: 13 kDa ribonucleoprotein-associated protein (125 aa).

The protein belongs to the eukaryotic ribosomal protein eL8 family. As to quaternary structure, component of the U3 snoRNP particle. Binds to the C'/D and B/C motifs in U3 snoRNA. Component of the 25S U4/U6.U5 tri-snRNP particle, a subcomplex of the spliceosome. Binds to the 5' stem-loop of U4 snRNA.

The protein localises to the nucleus. It is found in the nucleolus. Common component of the spliceosome and rRNA processing machinery. In association with the spliceosomal U4/U6.U5 tri-snRNP particle, required for splicing of pre-mRNA. In association with box C/D snoRNPs, required for processing of pre-ribosomal RNA (rRNA) and site-specific 2'-O-methylation of substrate RNAs. Essential for the accumulation and stability of U4 snRNA, U6 snRNA, and box C/D snoRNAs. In Schizosaccharomyces pombe (strain 972 / ATCC 24843) (Fission yeast), this protein is 13 kDa ribonucleoprotein-associated protein (snu13).